The primary structure comprises 293 residues: Alcohol dehydrogenase 1 (293 aa).

Zn(2+)-binding residues include Cys26, Cys29, Cys32, Cys40, and Cys104. Residues 129–134, Asp153, Arg158, Thr199, Val222, 222–224, and Phe249 each bind NAD(+); these read GLGAVG and VGV.

The protein belongs to the zinc-containing alcohol dehydrogenase family. As to quaternary structure, homodimer. Zn(2+) is required as a cofactor.

The protein localises to the cytoplasm. It catalyses the reaction a primary alcohol + NAD(+) = an aldehyde + NADH + H(+). The catalysed reaction is a secondary alcohol + NAD(+) = a ketone + NADH + H(+). The polypeptide is Alcohol dehydrogenase 1 (ADH1) (Zea luxurians (Guatemalan teosinte)).